The primary structure comprises 148 residues: Copper transport protein ctr6 (148 aa).

Topologically, residues M1–H33 are extracellular. A helical membrane pass occupies residues I34–F54. At E55–Y108 the chain is on the cytoplasmic side. A helical membrane pass occupies residues F109 to A129. Residues A130 to H148 lie on the Extracellular side of the membrane.

This sequence belongs to the copper transporter (Ctr) (TC 1.A.56) family. SLC31A subfamily. Homotrimer.

Its subcellular location is the vacuole membrane. Its function is as follows. Mobilizes stored copper from the vacuole to the cytoplasm under conditions of copper limitation. This is Copper transport protein ctr6 (ctr6) from Schizosaccharomyces pombe (strain 972 / ATCC 24843) (Fission yeast).